The following is a 221-amino-acid chain: Adenylate kinase (221 aa).

Position 10-15 (10-15) interacts with ATP; that stretch reads GAGKGT. The tract at residues 30–59 is NMP; that stretch reads STGDMLRAAVKAGTPLGLEAKRYMDAGELV. AMP contacts are provided by residues T31, R36, 57–59, 85–88, and Q92; these read ELV and GFPR. The interval 122 to 159 is LID; the sequence is GRRMHPASGRTYHVKFNPPKVEGVDDVTGEPLIQRDDD. ATP contacts are provided by residues R123 and 132–133; that span reads TY. AMP-binding residues include R156 and R167. G207 lines the ATP pocket.

Belongs to the adenylate kinase family. As to quaternary structure, monomer.

It localises to the cytoplasm. The catalysed reaction is AMP + ATP = 2 ADP. It functions in the pathway purine metabolism; AMP biosynthesis via salvage pathway; AMP from ADP: step 1/1. Functionally, catalyzes the reversible transfer of the terminal phosphate group between ATP and AMP. Plays an important role in cellular energy homeostasis and in adenine nucleotide metabolism. The polypeptide is Adenylate kinase (Paraburkholderia phymatum (strain DSM 17167 / CIP 108236 / LMG 21445 / STM815) (Burkholderia phymatum)).